The chain runs to 634 residues: Carbon monoxide dehydrogenase 2 (634 aa).

[4Fe-4S] cluster is bound by residues Cys-44, Cys-53, Cys-56, Cys-61, and Cys-73. Residues His-264, Cys-343, Cys-453, Cys-484, and Cys-525 each coordinate [Ni-4Fe-5S] cluster.

It belongs to the Ni-containing carbon monoxide dehydrogenase family. In terms of assembly, homodimer. [4Fe-4S] cluster serves as cofactor. [Ni-4Fe-5S] cluster is required as a cofactor.

The enzyme catalyses CO + 2 oxidized [2Fe-2S]-[ferredoxin] + H2O = 2 reduced [2Fe-2S]-[ferredoxin] + CO2 + 2 H(+). In terms of biological role, CODH oxidizes carbon monoxide coupled, via CooF, to the reduction of a hydrogen cation by a hydrogenase (possibly CooH). This chain is Carbon monoxide dehydrogenase 2 (cooS2), found in Methanosarcina mazei (strain ATCC BAA-159 / DSM 3647 / Goe1 / Go1 / JCM 11833 / OCM 88) (Methanosarcina frisia).